Here is a 450-residue protein sequence, read N- to C-terminus: MSTHVTFDYSKALSFIGENELTYLRDAVKVTHHAIHEKTGAGNDFLGWVELPLQYDKEEFARIQKCAEKIKNDSDILLVVGIGGSYLGARAAIEMLNHSFYNTLSKEQRKTPQVLFVGQNISSTYMKDLMDVLEGKDFSINVISKSGTTTEPAIAFRIFRKLLEEKYGKEEARKRIYATTDKARGALKTLSDNEGYETFVIPDDVGGRFSVLTPVGLLPIAVSGLNIEEMMKGAAAGHNDFAKSELEENPAYQYAVVRNALYNKGKTIEMLVNYEPALHYFSEWWKQLFGESEGKDQKGIFPSSANFSTDLHSLGQYIQEGRRDLFETVLKVGKSTHELKIELDDNDLDGLNYLAGETIDFVNTKAYEGTLLAHSDGGVPNLIVNIPELNEYTFGYLVYFFEKACAMSGYLLGVNPFDQPGVEAYKKNMFALLGKPGFEELKAELEERLK.

At threonine 39 the chain carries Phosphothreonine. Glutamate 291 (proton donor) is an active-site residue. Residues histidine 312 and lysine 426 contribute to the active site.

The protein belongs to the GPI family.

The protein localises to the cytoplasm. The catalysed reaction is alpha-D-glucose 6-phosphate = beta-D-fructose 6-phosphate. Its pathway is carbohydrate biosynthesis; gluconeogenesis. It participates in carbohydrate degradation; glycolysis; D-glyceraldehyde 3-phosphate and glycerone phosphate from D-glucose: step 2/4. Functionally, catalyzes the reversible isomerization of glucose-6-phosphate to fructose-6-phosphate. The protein is Glucose-6-phosphate isomerase of Bacillus mycoides (strain KBAB4) (Bacillus weihenstephanensis).